A 355-amino-acid polypeptide reads, in one-letter code: UDP-N-acetylglucosamine--N-acetylmuramyl-(pentapeptide) pyrophosphoryl-undecaprenol N-acetylglucosamine transferase (355 aa).

UDP-N-acetyl-alpha-D-glucosamine is bound by residues 7–9, asparagine 119, arginine 159, serine 187, isoleucine 241, and glutamine 286; that span reads TGG.

The protein belongs to the glycosyltransferase 28 family. MurG subfamily.

It localises to the cell inner membrane. The catalysed reaction is di-trans,octa-cis-undecaprenyl diphospho-N-acetyl-alpha-D-muramoyl-L-alanyl-D-glutamyl-meso-2,6-diaminopimeloyl-D-alanyl-D-alanine + UDP-N-acetyl-alpha-D-glucosamine = di-trans,octa-cis-undecaprenyl diphospho-[N-acetyl-alpha-D-glucosaminyl-(1-&gt;4)]-N-acetyl-alpha-D-muramoyl-L-alanyl-D-glutamyl-meso-2,6-diaminopimeloyl-D-alanyl-D-alanine + UDP + H(+). It participates in cell wall biogenesis; peptidoglycan biosynthesis. Its function is as follows. Cell wall formation. Catalyzes the transfer of a GlcNAc subunit on undecaprenyl-pyrophosphoryl-MurNAc-pentapeptide (lipid intermediate I) to form undecaprenyl-pyrophosphoryl-MurNAc-(pentapeptide)GlcNAc (lipid intermediate II). The polypeptide is UDP-N-acetylglucosamine--N-acetylmuramyl-(pentapeptide) pyrophosphoryl-undecaprenol N-acetylglucosamine transferase (Nitrosomonas eutropha (strain DSM 101675 / C91 / Nm57)).